Here is an 837-residue protein sequence, read N- to C-terminus: Protein translocase subunit SecA (837 aa).

ATP is bound by residues Q87, 105–109 (GEGKT), and D494. Positions 788 to 837 (HKESKSDLEYSDSENTETKKKPKRRSEPKVGRNDPCPCGSGKKYKKCCGK) are disordered. Residues C823, C825, C834, and C835 each contribute to the Zn(2+) site.

It belongs to the SecA family. As to quaternary structure, monomer and homodimer. Part of the essential Sec protein translocation apparatus which comprises SecA, SecYEG and auxiliary proteins SecDF-YajC and YidC. The cofactor is Zn(2+).

Its subcellular location is the cell inner membrane. The protein resides in the cytoplasm. The catalysed reaction is ATP + H2O + cellular proteinSide 1 = ADP + phosphate + cellular proteinSide 2.. Part of the Sec protein translocase complex. Interacts with the SecYEG preprotein conducting channel. Has a central role in coupling the hydrolysis of ATP to the transfer of proteins into and across the cell membrane, serving as an ATP-driven molecular motor driving the stepwise translocation of polypeptide chains across the membrane. The chain is Protein translocase subunit SecA from Maridesulfovibrio salexigens (strain ATCC 14822 / DSM 2638 / NCIMB 8403 / VKM B-1763) (Desulfovibrio salexigens).